We begin with the raw amino-acid sequence, 423 residues long: Histidine--tRNA ligase (423 aa).

Belongs to the class-II aminoacyl-tRNA synthetase family. In terms of assembly, homodimer.

It localises to the cytoplasm. It catalyses the reaction tRNA(His) + L-histidine + ATP = L-histidyl-tRNA(His) + AMP + diphosphate + H(+). The sequence is that of Histidine--tRNA ligase (hisS) from Pasteurella multocida (strain Pm70).